A 350-amino-acid polypeptide reads, in one-letter code: S-adenosylmethionine:tRNA ribosyltransferase-isomerase (350 aa).

This sequence belongs to the QueA family. In terms of assembly, monomer.

It is found in the cytoplasm. The catalysed reaction is 7-aminomethyl-7-carbaguanosine(34) in tRNA + S-adenosyl-L-methionine = epoxyqueuosine(34) in tRNA + adenine + L-methionine + 2 H(+). Its pathway is tRNA modification; tRNA-queuosine biosynthesis. Functionally, transfers and isomerizes the ribose moiety from AdoMet to the 7-aminomethyl group of 7-deazaguanine (preQ1-tRNA) to give epoxyqueuosine (oQ-tRNA). This chain is S-adenosylmethionine:tRNA ribosyltransferase-isomerase, found in Aliivibrio fischeri (strain MJ11) (Vibrio fischeri).